The chain runs to 357 residues: S-adenosylmethionine:tRNA ribosyltransferase-isomerase (357 aa).

Belongs to the QueA family. As to quaternary structure, monomer.

The protein resides in the cytoplasm. It carries out the reaction 7-aminomethyl-7-carbaguanosine(34) in tRNA + S-adenosyl-L-methionine = epoxyqueuosine(34) in tRNA + adenine + L-methionine + 2 H(+). It functions in the pathway tRNA modification; tRNA-queuosine biosynthesis. In terms of biological role, transfers and isomerizes the ribose moiety from AdoMet to the 7-aminomethyl group of 7-deazaguanine (preQ1-tRNA) to give epoxyqueuosine (oQ-tRNA). This Edwardsiella ictaluri (strain 93-146) protein is S-adenosylmethionine:tRNA ribosyltransferase-isomerase.